The sequence spans 97 residues: Co-chaperonin GroES (97 aa).

The protein belongs to the GroES chaperonin family. Heptamer of 7 subunits arranged in a ring. Interacts with the chaperonin GroEL.

Its subcellular location is the cytoplasm. Its function is as follows. Together with the chaperonin GroEL, plays an essential role in assisting protein folding. The GroEL-GroES system forms a nano-cage that allows encapsulation of the non-native substrate proteins and provides a physical environment optimized to promote and accelerate protein folding. GroES binds to the apical surface of the GroEL ring, thereby capping the opening of the GroEL channel. The chain is Co-chaperonin GroES from Klebsiella pneumoniae (strain 342).